Consider the following 495-residue polypeptide: UDP-glycosyltransferase 73C13 (495 aa).

Residue His24 is the Proton acceptor of the active site. An an anthocyanidin-binding site is contributed by His24. Asp129 (charge relay) is an active-site residue. Positions 356, 358, 373, 376, 377, 378, and 381 each coordinate UDP-alpha-D-glucose. An an anthocyanidin-binding site is contributed by Ala396. Residues Asp397 and Gln398 each coordinate UDP-alpha-D-glucose.

Belongs to the UDP-glycosyltransferase family.

It carries out the reaction oleanolate + UDP-alpha-D-glucose = oleanolate 3-O-beta-D-glucoside + UDP + H(+). Functionally, catalyzes the transfer of a glucose (Glc) moiety from UDP-Glc to the C-3 position of the oleanane sapogenins oleanolate and hederagenin, and to the C-28 carboxylic group of the lupane sapogenin betulinate. The monoglucosylated hederagenin 3-O-beta-D-glucoside is a feeding deterrent of the yellow-striped flea beetle (Phyllotreta nemorum). The protein is UDP-glycosyltransferase 73C13 of Barbarea vulgaris (Yellow rocket).